A 145-amino-acid chain; its full sequence is Putative pre-16S rRNA nuclease (145 aa).

This sequence belongs to the YqgF nuclease family.

The protein resides in the cytoplasm. Could be a nuclease involved in processing of the 5'-end of pre-16S rRNA. The chain is Putative pre-16S rRNA nuclease from Thiobacillus denitrificans (strain ATCC 25259 / T1).